We begin with the raw amino-acid sequence, 87 residues long: Large ribosomal subunit protein bL31B (87 aa).

The protein belongs to the bacterial ribosomal protein bL31 family. Type B subfamily. As to quaternary structure, part of the 50S ribosomal subunit.

The chain is Large ribosomal subunit protein bL31B from Latilactobacillus sakei subsp. sakei (strain 23K) (Lactobacillus sakei subsp. sakei).